The chain runs to 588 residues: Pescadillo homolog (588 aa).

The 94-residue stretch at 344–437 folds into the BRCT domain; sequence PVSTLFSDFV…KLVPANLYLP (94 aa). Disordered stretches follow at residues 446-533 and 559-588; these read SPWG…EAEE and KKEEKVENLKKKKKQISKTKEKLTKLEGKK. Residues 460-493 are compositionally biased toward acidic residues; that stretch reads DAEEEGEDDEDEDSEEGSGAEVEENVDEDEDDEE. 2 stretches are compositionally biased toward basic and acidic residues: residues 510–519 and 576–588; these read SDIKDTEVKS and KTKEKLTKLEGKK. Residues 512–588 adopt a coiled-coil conformation; the sequence is IKDTEVKSKN…EKLTKLEGKK (77 aa).

The protein belongs to the pescadillo family. Component of the NOP7 complex, composed of ERB1, NOP7 and YTM1. The complex is held together by ERB1, which interacts with NOP7 via its N-terminal domain and with YTM1 via a high-affinity interaction between the seven-bladed beta-propeller domains of the 2 proteins. The NOP7 complex associates with the 66S pre-ribosome.

It is found in the nucleus. The protein resides in the nucleolus. Its subcellular location is the nucleoplasm. In terms of biological role, component of the NOP7 complex, which is required for maturation of the 25S and 5.8S ribosomal RNAs and formation of the 60S ribosome. The sequence is that of Pescadillo homolog from Vanderwaltozyma polyspora (strain ATCC 22028 / DSM 70294 / BCRC 21397 / CBS 2163 / NBRC 10782 / NRRL Y-8283 / UCD 57-17) (Kluyveromyces polysporus).